The primary structure comprises 411 residues: 2,3-bisphosphoglycerate-independent phosphoglycerate mutase 1 (411 aa).

Belongs to the BPG-independent phosphoglycerate mutase family. A-PGAM subfamily. As to quaternary structure, homotetramer. It depends on Mg(2+) as a cofactor.

The enzyme catalyses (2R)-2-phosphoglycerate = (2R)-3-phosphoglycerate. Its pathway is carbohydrate degradation; glycolysis; pyruvate from D-glyceraldehyde 3-phosphate: step 3/5. Its activity is regulated as follows. Inhibited to approximately 20% by EDTA. Functionally, catalyzes the interconversion of 2-phosphoglycerate and 3-phosphoglycerate. The sequence is that of 2,3-bisphosphoglycerate-independent phosphoglycerate mutase 1 (apgM1) from Methanocaldococcus jannaschii (strain ATCC 43067 / DSM 2661 / JAL-1 / JCM 10045 / NBRC 100440) (Methanococcus jannaschii).